The chain runs to 522 residues: Peptide chain release factor 3 (522 aa).

Residues 10 to 277 form the tr-type G domain; that stretch reads ASRKTFAIIS…TFVDFAPAPS (268 aa). GTP-binding positions include 19–26, 87–91, and 141–144; these read SHPDAGKT, DTPGH, and NKMD.

It belongs to the TRAFAC class translation factor GTPase superfamily. Classic translation factor GTPase family. PrfC subfamily.

It is found in the cytoplasm. Increases the formation of ribosomal termination complexes and stimulates activities of RF-1 and RF-2. It binds guanine nucleotides and has strong preference for UGA stop codons. It may interact directly with the ribosome. The stimulation of RF-1 and RF-2 is significantly reduced by GTP and GDP, but not by GMP. This chain is Peptide chain release factor 3, found in Listeria welshimeri serovar 6b (strain ATCC 35897 / DSM 20650 / CCUG 15529 / CIP 8149 / NCTC 11857 / SLCC 5334 / V8).